The primary structure comprises 353 residues: MRVSDFDFHLPEARIALRPARPRDAARMLHVASNGVFADRGVRDLPDLLQPGDLMVFNDTRVIPAALKGIRPARAVGGGGPVEVEVNLHKRIDASAWRAFVRPAKRLRMGDEIAFGETLKAEVTGKSEGGDVRLVFNAAGAALDAAIAVAGEMPLPPYIARKRGVDEKDEADYQTLFATHEGSVAAPTAGLHFTPELMAALEARGVEQTRVTLHVGAGTFLPVKSDDTDDHQMHSEWCTVSAEAADAINAAKAEGRRVIPVGTTALRTIESLASGPGIVRAGSRDTDIFLTPGSDFAITDMLMTNFHLPKSTLFMLVSALSGLDVMQRAYAHAIAAEYRFYSYGDACLLERRT.

This sequence belongs to the QueA family. Monomer.

It is found in the cytoplasm. The catalysed reaction is 7-aminomethyl-7-carbaguanosine(34) in tRNA + S-adenosyl-L-methionine = epoxyqueuosine(34) in tRNA + adenine + L-methionine + 2 H(+). The protein operates within tRNA modification; tRNA-queuosine biosynthesis. Transfers and isomerizes the ribose moiety from AdoMet to the 7-aminomethyl group of 7-deazaguanine (preQ1-tRNA) to give epoxyqueuosine (oQ-tRNA). The sequence is that of S-adenosylmethionine:tRNA ribosyltransferase-isomerase from Maricaulis maris (strain MCS10) (Caulobacter maris).